An 88-amino-acid polypeptide reads, in one-letter code: UPF0297 protein LACR_0137 (88 aa).

Belongs to the UPF0297 family.

The protein is UPF0297 protein LACR_0137 of Lactococcus lactis subsp. cremoris (strain SK11).